Here is a 409-residue protein sequence, read N- to C-terminus: Tyrosine--tRNA ligase (409 aa).

Y39 lines the L-tyrosine pocket. A 'HIGH' region motif is present at residues 44-53 (PTAASLHVGS). The L-tyrosine site is built by Y176 and Q180. Positions 236-240 (KMGKT) match the 'KMSKS' region motif. K239 is a binding site for ATP. The region spanning 346–408 (ISLVDALVGL…GKKAHGVIQA (63 aa)) is the S4 RNA-binding domain.

The protein belongs to the class-I aminoacyl-tRNA synthetase family. TyrS type 1 subfamily. As to quaternary structure, homodimer.

It localises to the cytoplasm. The enzyme catalyses tRNA(Tyr) + L-tyrosine + ATP = L-tyrosyl-tRNA(Tyr) + AMP + diphosphate + H(+). Catalyzes the attachment of tyrosine to tRNA(Tyr) in a two-step reaction: tyrosine is first activated by ATP to form Tyr-AMP and then transferred to the acceptor end of tRNA(Tyr). In Zymomonas mobilis subsp. mobilis (strain ATCC 31821 / ZM4 / CP4), this protein is Tyrosine--tRNA ligase.